Reading from the N-terminus, the 260-residue chain is Phosphate import ATP-binding protein PstB (260 aa).

In terms of domain architecture, ABC transporter spans 13–255; that stretch reads MRAQGVNVFY…PKQERTKDYI (243 aa). 45–52 is a binding site for ATP; that stretch reads GPSGCGKS.

It belongs to the ABC transporter superfamily. Phosphate importer (TC 3.A.1.7) family. The complex is composed of two ATP-binding proteins (PstB), two transmembrane proteins (PstC and PstA) and a solute-binding protein (PstS).

The protein localises to the cell inner membrane. It carries out the reaction phosphate(out) + ATP + H2O = ADP + 2 phosphate(in) + H(+). In terms of biological role, part of the ABC transporter complex PstSACB involved in phosphate import. Responsible for energy coupling to the transport system. This Sphingopyxis alaskensis (strain DSM 13593 / LMG 18877 / RB2256) (Sphingomonas alaskensis) protein is Phosphate import ATP-binding protein PstB.